Consider the following 408-residue polypeptide: Glutamate N-acetyltransferase (408 aa).

Residues threonine 150, lysine 176, threonine 189, glutamate 271, asparagine 403, and threonine 408 each coordinate substrate. The Nucleophile role is filled by threonine 189.

This sequence belongs to the ArgJ family. Heterotetramer of two alpha and two beta chains.

The protein localises to the cytoplasm. It catalyses the reaction N(2)-acetyl-L-ornithine + L-glutamate = N-acetyl-L-glutamate + L-ornithine. Its pathway is amino-acid biosynthesis; L-arginine biosynthesis; L-ornithine and N-acetyl-L-glutamate from L-glutamate and N(2)-acetyl-L-ornithine (cyclic): step 1/1. Its function is as follows. Catalyzes the transfer of the acetyl group from N(2)-acetylornithine to glutamate, forming N-acetylglutamate and L-ornithine. The polypeptide is Glutamate N-acetyltransferase (Methanococcus maripaludis (strain C7 / ATCC BAA-1331)).